A 46-amino-acid polypeptide reads, in one-letter code: Protein YmiA (46 aa).

Residues 22 to 42 (AWLAVFLGSALFWVVVALLIW) form a helical membrane-spanning segment.

The protein localises to the cell inner membrane. This is Protein YmiA (ymiA) from Escherichia coli (strain K12).